The chain runs to 89 residues: Neuropeptide S (89 aa).

The signal sequence occupies residues 1 to 23; the sequence is MISSVKLNLILVLSLSTMHVFWC. The propeptide occupies 24–67; it reads YPVPSSKVSGKSDYFLILLNSCPTRLDRSKELAFLKPILEKMFV.

Its subcellular location is the secreted. Functionally, modulates arousal and anxiety. May play an important anorexigenic role. Binds to its receptor NPSR1 with nanomolar affinity to increase intracellular calcium concentrations. The chain is Neuropeptide S (NPS) from Homo sapiens (Human).